We begin with the raw amino-acid sequence, 296 residues long: Probable endonuclease 4 (296 aa).

Residues His68, His109, Glu144, Asp178, His181, His213, Asp226, His228, and Glu258 each contribute to the Zn(2+) site.

It belongs to the AP endonuclease 2 family. Zn(2+) is required as a cofactor.

It carries out the reaction Endonucleolytic cleavage to 5'-phosphooligonucleotide end-products.. Its function is as follows. Endonuclease IV plays a role in DNA repair. It cleaves phosphodiester bonds at apurinic or apyrimidinic (AP) sites, generating a 3'-hydroxyl group and a 5'-terminal sugar phosphate. This Staphylococcus saprophyticus subsp. saprophyticus (strain ATCC 15305 / DSM 20229 / NCIMB 8711 / NCTC 7292 / S-41) protein is Probable endonuclease 4.